The following is a 448-amino-acid chain: Methylenetetrahydrofolate--tRNA-(uracil-5-)-methyltransferase TrmFO (448 aa).

13–18 (GAGLAG) lines the FAD pocket.

The protein belongs to the MnmG family. TrmFO subfamily. The cofactor is FAD.

The protein localises to the cytoplasm. The catalysed reaction is uridine(54) in tRNA + (6R)-5,10-methylene-5,6,7,8-tetrahydrofolate + NADH + H(+) = 5-methyluridine(54) in tRNA + (6S)-5,6,7,8-tetrahydrofolate + NAD(+). The enzyme catalyses uridine(54) in tRNA + (6R)-5,10-methylene-5,6,7,8-tetrahydrofolate + NADPH + H(+) = 5-methyluridine(54) in tRNA + (6S)-5,6,7,8-tetrahydrofolate + NADP(+). Functionally, catalyzes the folate-dependent formation of 5-methyl-uridine at position 54 (M-5-U54) in all tRNAs. This Streptococcus pyogenes serotype M2 (strain MGAS10270) protein is Methylenetetrahydrofolate--tRNA-(uracil-5-)-methyltransferase TrmFO.